We begin with the raw amino-acid sequence, 580 residues long: tRNA-guanine(15) transglycosylase (580 aa).

Asp-91 (nucleophile) is an active-site residue. Residues Asp-126 and Ala-192 each contribute to the substrate site. Zn(2+)-binding residues include Cys-275, Cys-277, and Cys-280. Positions 504–579 (RMRVVVDEDA…LAVKVRRGVE (76 aa)) constitute a PUA domain.

It belongs to the archaeosine tRNA-ribosyltransferase family. Zn(2+) serves as cofactor.

It catalyses the reaction guanosine(15) in tRNA + 7-cyano-7-deazaguanine = 7-cyano-7-carbaguanosine(15) in tRNA + guanine. The protein operates within tRNA modification; archaeosine-tRNA biosynthesis. In terms of biological role, exchanges the guanine residue with 7-cyano-7-deazaguanine (preQ0) at position 15 in the dihydrouridine loop (D-loop) of archaeal tRNAs. The protein is tRNA-guanine(15) transglycosylase of Thermococcus kodakarensis (strain ATCC BAA-918 / JCM 12380 / KOD1) (Pyrococcus kodakaraensis (strain KOD1)).